We begin with the raw amino-acid sequence, 205 residues long: MTKRNEAKYKIDRRMGQNIWGRPKSPVNKREYGPGQHGQRRKGKLSDFGTQLRAKQKLKGYYANISERQFYAVYVEATRLKGDSGENLIGLLERRLDAIVYRAKFVPTMFAARQFINHGHIKVNGKRVNIPSYKVKVGDVIEVKDASKQLALVLEANQLAERDVPDFLDVDHGKQTAKFTRIPSLSEVPFPVQMEPHLIIEFYSR.

The interval N18–G49 is disordered. Residues R94–N157 form the S4 RNA-binding domain.

Belongs to the universal ribosomal protein uS4 family. As to quaternary structure, part of the 30S ribosomal subunit. Contacts protein S5. The interaction surface between S4 and S5 is involved in control of translational fidelity.

In terms of biological role, one of the primary rRNA binding proteins, it binds directly to 16S rRNA where it nucleates assembly of the body of the 30S subunit. Its function is as follows. With S5 and S12 plays an important role in translational accuracy. The sequence is that of Small ribosomal subunit protein uS4 from Afipia carboxidovorans (strain ATCC 49405 / DSM 1227 / KCTC 32145 / OM5) (Oligotropha carboxidovorans).